Here is a 288-residue protein sequence, read N- to C-terminus: Peroxisomal protein PEX21 (288 aa).

Cys-5 is covalently cross-linked (Glycyl cysteine thioester (Cys-Gly) (interchain with G-Cter in ubiquitin)).

This sequence belongs to the peroxin-21 family. Interacts with PEX7. Interacts with PEX13. Interacts with SES1. In terms of processing, monoubiquitinated at Cys-5; acts as a signal for PEX21 extraction and is required for proper export from peroxisomes and recycling.

It is found in the cytoplasm. Its subcellular location is the cytosol. The protein localises to the peroxisome. In terms of biological role, receptor that mediates peroxisomal import of proteins containing a C-terminal PTS2-type peroxisomal targeting signal via its interaction with PEX7. Interaction with PEX7 only takes place when PEX7 is associated with cargo proteins containing a PTS2 peroxisomal targeting signal. PEX7 along with PTS2-containing cargo proteins are then translocated through the PEX13-PEX14 docking complex together with PEX21. Acts as an activator of the seryl-tRNA synthetase SES1 by increasing its binding to tRNA. This Saccharomyces cerevisiae (strain ATCC 204508 / S288c) (Baker's yeast) protein is Peroxisomal protein PEX21 (PEX21).